Here is a 186-residue protein sequence, read N- to C-terminus: MISSNDFRTGTTIELDGQVWRVVEFLHVKPGKGSAFVRTKLKSVQNGNVVEKTFRAGESVQQAILEKSNLQHTYVESGDYVFMDMTSFEETRLSSEQIGKGAKYLKEGMEVNVIFHNGKVLEVELPISITLKVTETDPGVKGDTASGGTKPAILETGAQVMVPLFISVGEMIRVDTRNDSYLGREN.

Belongs to the elongation factor P family.

The protein localises to the cytoplasm. Its pathway is protein biosynthesis; polypeptide chain elongation. Involved in peptide bond synthesis. Stimulates efficient translation and peptide-bond synthesis on native or reconstituted 70S ribosomes in vitro. Probably functions indirectly by altering the affinity of the ribosome for aminoacyl-tRNA, thus increasing their reactivity as acceptors for peptidyl transferase. This Prochlorococcus marinus (strain MIT 9301) protein is Elongation factor P.